A 208-amino-acid chain; its full sequence is Uracil phosphoribosyltransferase (208 aa).

5-phospho-alpha-D-ribose 1-diphosphate-binding positions include arginine 78, arginine 103, and 130-138 (DPMLATGGS). Residues isoleucine 193 and 198–200 (GDA) each bind uracil. Aspartate 199 is a 5-phospho-alpha-D-ribose 1-diphosphate binding site.

Belongs to the UPRTase family. The cofactor is Mg(2+).

It catalyses the reaction UMP + diphosphate = 5-phospho-alpha-D-ribose 1-diphosphate + uracil. Its pathway is pyrimidine metabolism; UMP biosynthesis via salvage pathway; UMP from uracil: step 1/1. With respect to regulation, allosterically activated by GTP. Its function is as follows. Catalyzes the conversion of uracil and 5-phospho-alpha-D-ribose 1-diphosphate (PRPP) to UMP and diphosphate. The chain is Uracil phosphoribosyltransferase from Salmonella agona (strain SL483).